A 233-amino-acid polypeptide reads, in one-letter code: Ribosomal RNA small subunit methyltransferase G (233 aa).

Residues Gly-91, Met-96, 142–143 (VE), and Arg-157 each bind S-adenosyl-L-methionine.

It belongs to the methyltransferase superfamily. RNA methyltransferase RsmG family.

It is found in the cytoplasm. The catalysed reaction is guanosine(527) in 16S rRNA + S-adenosyl-L-methionine = N(7)-methylguanosine(527) in 16S rRNA + S-adenosyl-L-homocysteine. Its function is as follows. Specifically methylates the N7 position of guanine in position 527 of 16S rRNA. In Cupriavidus necator (strain ATCC 17699 / DSM 428 / KCTC 22496 / NCIMB 10442 / H16 / Stanier 337) (Ralstonia eutropha), this protein is Ribosomal RNA small subunit methyltransferase G.